A 352-amino-acid chain; its full sequence is Probable protein kinase DDB_G0291842 (352 aa).

Positions 1–57 (MRPLPDQSAFEDKSELVSKKQKNEDENNENRSPETPRTPKVCPKTPTKTPLRTPTKN) are disordered. The span at 10–34 (FEDKSELVSKKQKNEDENNENRSPE) shows a compositional bias: basic and acidic residues. Residues 38–56 (TPKVCPKTPTKTPLRTPTK) are compositionally biased toward low complexity. One can recognise a Protein kinase domain in the interval 77–331 (FEYINQIGEG…IQSLLKYDKL (255 aa)). Residues 83 to 91 (IGEGSFAKV) and lysine 106 each bind ATP. The active-site Proton acceptor is aspartate 207. Mg(2+) is bound by residues asparagine 212 and aspartate 225.

Belongs to the protein kinase superfamily. Ser/Thr protein kinase family. WEE1 subfamily.

The catalysed reaction is L-seryl-[protein] + ATP = O-phospho-L-seryl-[protein] + ADP + H(+). It catalyses the reaction L-threonyl-[protein] + ATP = O-phospho-L-threonyl-[protein] + ADP + H(+). The chain is Probable protein kinase DDB_G0291842 from Dictyostelium discoideum (Social amoeba).